The following is a 554-amino-acid chain: Serine/threonine-protein phosphatase 2B catalytic subunit (554 aa).

Fe cation-binding residues include Asp119, His121, and Asp147. Residues Asp147 and Asn179 each coordinate Zn(2+). The Proton donor role is filled by His180. Residues His228 and His310 each coordinate Zn(2+). Positions 411–433 (LKESAPTQHKQPAPSENENKADQ) are disordered. The span at 415-426 (APTQHKQPAPSE) shows a compositional bias: polar residues.

It belongs to the PPP phosphatase family. PP-2B subfamily. Composed of two components (A and B), the A component is the catalytic subunit and the B component confers calcium sensitivity. The cofactor is Fe(3+). It depends on Zn(2+) as a cofactor.

The catalysed reaction is O-phospho-L-seryl-[protein] + H2O = L-seryl-[protein] + phosphate. The enzyme catalyses O-phospho-L-threonyl-[protein] + H2O = L-threonyl-[protein] + phosphate. In terms of biological role, calcium-dependent, calmodulin-stimulated protein phosphatase. This subunit may have a role in the calmodulin activation of calcineurin. Appears to be involved in cytokinesis, mating, transport, nuclear and spindle pole body positioning, and cell shape. This chain is Serine/threonine-protein phosphatase 2B catalytic subunit (ppb1), found in Schizosaccharomyces pombe (strain 972 / ATCC 24843) (Fission yeast).